We begin with the raw amino-acid sequence, 55 residues long: ATP synthase F(0) complex subunit 8 (55 aa).

The helical transmembrane segment at 4-24 threads the bilayer; it reads LNPHPWFSIFITSWLILIIIL.

The protein belongs to the ATPase protein 8 family. Component of the ATP synthase complex composed at least of ATP5F1A/subunit alpha, ATP5F1B/subunit beta, ATP5MC1/subunit c (homooctomer), MT-ATP6/subunit a, MT-ATP8/subunit 8, ATP5ME/subunit e, ATP5MF/subunit f, ATP5MG/subunit g, ATP5MK/subunit k, ATP5MJ/subunit j, ATP5F1C/subunit gamma, ATP5F1D/subunit delta, ATP5F1E/subunit epsilon, ATP5PF/subunit F6, ATP5PB/subunit b, ATP5PD/subunit d, ATP5PO/subunit OSCP. ATP synthase complex consists of a soluble F(1) head domain (subunits alpha(3) and beta(3)) - the catalytic core - and a membrane F(0) domain - the membrane proton channel (subunits c, a, 8, e, f, g, k and j). These two domains are linked by a central stalk (subunits gamma, delta, and epsilon) rotating inside the F1 region and a stationary peripheral stalk (subunits F6, b, d, and OSCP).

The protein resides in the mitochondrion membrane. Functionally, subunit 8, of the mitochondrial membrane ATP synthase complex (F(1)F(0) ATP synthase or Complex V) that produces ATP from ADP in the presence of a proton gradient across the membrane which is generated by electron transport complexes of the respiratory chain. ATP synthase complex consist of a soluble F(1) head domain - the catalytic core - and a membrane F(1) domain - the membrane proton channel. These two domains are linked by a central stalk rotating inside the F(1) region and a stationary peripheral stalk. During catalysis, ATP synthesis in the catalytic domain of F(1) is coupled via a rotary mechanism of the central stalk subunits to proton translocation. In vivo, can only synthesize ATP although its ATP hydrolase activity can be activated artificially in vitro. Part of the complex F(0) domain. The polypeptide is ATP synthase F(0) complex subunit 8 (Pelomedusa subrufa (African side-necked turtle)).